Consider the following 239-residue polypeptide: Uridylate kinase (239 aa).

12–15 (KLSG) is a binding site for ATP. Glycine 53 contributes to the UMP binding site. The ATP site is built by glycine 54 and arginine 58. Residues aspartate 73 and 135–142 (TGSPCFTT) contribute to the UMP site. Residues threonine 162, tyrosine 168, and aspartate 171 each coordinate ATP.

It belongs to the UMP kinase family. As to quaternary structure, homohexamer.

It localises to the cytoplasm. It catalyses the reaction UMP + ATP = UDP + ADP. It participates in pyrimidine metabolism; CTP biosynthesis via de novo pathway; UDP from UMP (UMPK route): step 1/1. Its activity is regulated as follows. Inhibited by UTP. Catalyzes the reversible phosphorylation of UMP to UDP. The polypeptide is Uridylate kinase (Ruthia magnifica subsp. Calyptogena magnifica).